Reading from the N-terminus, the 138-residue chain is Small ribosomal subunit protein uS11c (138 aa).

The tract at residues 1 to 24 is disordered; that stretch reads MTKPIPRIGSRRNGRIGSRKSGRR. A compositionally biased stretch (basic residues) spans 9–24; it reads GSRRNGRIGSRKSGRR.

The protein belongs to the universal ribosomal protein uS11 family. Part of the 30S ribosomal subunit.

The protein localises to the plastid. The protein resides in the chloroplast. The chain is Small ribosomal subunit protein uS11c from Liriodendron tulipifera (Tuliptree).